A 616-amino-acid chain; its full sequence is UvrABC system protein C (616 aa).

The GIY-YIG domain maps to 12–97; that stretch reads NDAGVYQYFD…IKQLKPKYNI (86 aa). Residues 203 to 238 form the UVR domain; the sequence is TKLISKLNEKMLQYSNDFRFEEAMTLRDRIKTIEKS.

This sequence belongs to the UvrC family. Interacts with UvrB in an incision complex.

It localises to the cytoplasm. Functionally, the UvrABC repair system catalyzes the recognition and processing of DNA lesions. UvrC both incises the 5' and 3' sides of the lesion. The N-terminal half is responsible for the 3' incision and the C-terminal half is responsible for the 5' incision. The sequence is that of UvrABC system protein C from Aliarcobacter butzleri (strain RM4018) (Arcobacter butzleri).